We begin with the raw amino-acid sequence, 188 residues long: uncharacterized protein (188 aa).

This is an uncharacterized protein from Homo sapiens (Human).